The sequence spans 86 residues: Anti-adapter protein IraP (86 aa).

Residues methionine 1–methionine 36 adopt a coiled-coil conformation.

Belongs to the IraP family. As to quaternary structure, interacts with RssB.

The protein localises to the cytoplasm. Inhibits RpoS proteolysis by regulating RssB activity, thereby increasing the stability of the sigma stress factor RpoS especially during phosphate starvation, but also in stationary phase and during nitrogen starvation. Its effect on RpoS stability is due to its interaction with RssB, which probably blocks the interaction of RssB with RpoS, and the consequent delivery of the RssB-RpoS complex to the ClpXP protein degradation pathway. This Escherichia coli (strain SE11) protein is Anti-adapter protein IraP.